Consider the following 409-residue polypeptide: Protein naked cuticle homolog 2-like (409 aa).

Gly2 carries N-myristoyl glycine lipidation. In terms of domain architecture, EF-hand spans 109–144 (AEDNRQEWVFTLYDFDNSGKVTKEDMSSLMHTIYDV). Ca(2+) is bound by residues Asp122, Asp124, Ser126, Lys128, and Asp133. Disordered stretches follow at residues 166–224 (VTPE…YCVD), 243–315 (TSRF…RFPG), 346–367 (NHTHAHTPSGLQHSHSRRIRSR), and 388–409 (RHEHHHHHEHHHHHHYHHYHQT). Basic and acidic residues-rich tracts occupy residues 171 to 185 (AARRRDATHTERETS) and 193 to 224 (VRSEEHRSADRRQSTHIRGQTEAHEGNHYCVD). Over residues 247–268 (DSSSPDADQDPPSRSSHSQSRP) the composition is skewed to low complexity. Positions 389–409 (HEHHHHHEHHHHHHYHHYHQT) are enriched in basic residues.

The protein belongs to the NKD family.

The protein localises to the cell membrane. It localises to the cytoplasm. Its function is as follows. Cell autonomous antagonist of both the canonical and non-canonical Wnt signaling pathways. The chain is Protein naked cuticle homolog 2-like (nkd2l) from Danio rerio (Zebrafish).